Reading from the N-terminus, the 342-residue chain is DDB1- and CUL4-associated factor 7 (342 aa).

7 WD repeats span residues lysine 6–leucine 52, isoleucine 60–valine 100, glutamate 108–leucine 150, histidine 165–leucine 206, threonine 213–valine 252, threonine 257–isoleucine 296, and isoleucine 303–valine 342.

This sequence belongs to the WD repeat DCAF7 family. In terms of assembly, interacts with DYRK1A, DYRK1B and DIAPH1. Interacts with DDB1. Interacts with ZNF703. Interacts with human adenovirus 5 E1A protein.

It is found in the cytoplasm. The protein resides in the nucleus. It functions in the pathway protein modification; protein ubiquitination. Its function is as follows. Involved in craniofacial development. Acts upstream of the EDN1 pathway and is required for formation of the upper jaw equivalent, the palatoquadrate. The activity required for EDN1 pathway function differs between the first and second arches. Associates with DIAPH1 and controls GLI1 transcriptional activity. Could be involved in normal and disease skin development. May function as a substrate receptor for CUL4-DDB1 E3 ubiquitin-protein ligase complex. The protein is DDB1- and CUL4-associated factor 7 (DCAF7) of Homo sapiens (Human).